We begin with the raw amino-acid sequence, 407 residues long: Argininosuccinate synthase (407 aa).

ATP contacts are provided by residues 16 to 24 and alanine 44; that span reads AYSGGLDTS. 2 residues coordinate L-citrulline: tyrosine 96 and serine 101. Glycine 126 lines the ATP pocket. Residues threonine 128, asparagine 132, and aspartate 133 each contribute to the L-aspartate site. Position 132 (asparagine 132) interacts with L-citrulline. Positions 136, 185, 194, 270, and 282 each coordinate L-citrulline.

It belongs to the argininosuccinate synthase family. Type 1 subfamily. In terms of assembly, homotetramer.

It localises to the cytoplasm. It catalyses the reaction L-citrulline + L-aspartate + ATP = 2-(N(omega)-L-arginino)succinate + AMP + diphosphate + H(+). The protein operates within amino-acid biosynthesis; L-arginine biosynthesis; L-arginine from L-ornithine and carbamoyl phosphate: step 2/3. This Shewanella loihica (strain ATCC BAA-1088 / PV-4) protein is Argininosuccinate synthase.